We begin with the raw amino-acid sequence, 303 residues long: Phosphatidylglycerol--prolipoprotein diacylglyceryl transferase (303 aa).

The next 3 membrane-spanning stretches (helical) occupy residues 18-38, 58-78, and 107-127; these read VGFF…LIGL, LLPI…VIFE, and WQGG…ILIF. Position 154 (Arg154) interacts with a 1,2-diacyl-sn-glycero-3-phospho-(1'-sn-glycerol). A run of 2 helical transmembrane segments spans residues 193–213 and 266–286; these read PTFL…ISLI and IAQL…FWIY.

Belongs to the Lgt family.

The protein localises to the cell inner membrane. The enzyme catalyses L-cysteinyl-[prolipoprotein] + a 1,2-diacyl-sn-glycero-3-phospho-(1'-sn-glycerol) = an S-1,2-diacyl-sn-glyceryl-L-cysteinyl-[prolipoprotein] + sn-glycerol 1-phosphate + H(+). It participates in protein modification; lipoprotein biosynthesis (diacylglyceryl transfer). In terms of biological role, catalyzes the transfer of the diacylglyceryl group from phosphatidylglycerol to the sulfhydryl group of the N-terminal cysteine of a prolipoprotein, the first step in the formation of mature lipoproteins. The chain is Phosphatidylglycerol--prolipoprotein diacylglyceryl transferase from Prochlorococcus marinus (strain MIT 9211).